A 602-amino-acid polypeptide reads, in one-letter code: MEKEVIAYLDNETIIDSQSVKNTNLKEIYFDNSKESLEVIRHSCAHLMAQAIKSLYPEAKFFVGPVIEDGFYYDFCVESKIGEEDLVKIEKKMKELAEAKIEISKYKITKNEALAKFQNDDLKQEVLLRIPDGAVSIYKQGEFEDLCRGPHVPNTKFLRFFKLTRVAGAYLGGDEKREMLTRIYGTAFADKESLKEYLAIIEEAKKRDHRKLGIELKLFTFNDEIGGGLPIWLGNGARLRSKLEHMLYKIHRLRGYEPVRGPELLKADAWKISGHYANYKENMYFTQIDEQEYGIKPMNCVGHIKVYQSDVRSYRDLPLKFFEYGVVHRHEKSGVLHGLFRVREFTQDDAHIFCMPSQIKEQVLEILAFVDNLMKLFDFSYEMEISTKPEKAIGDDEIWEVATKALKEALDEQGLKYGIDEGGGAFYGPKIDIKITDALKRKWQCGTIQVDFNLPSRFKLEYTDSDNEKKQPVMLHRAILGSFERFIGILTEHCAGEFPFFIAPTAVGIVPIGEAHIAYAKEIQKELLELNIDSEVYEKNESLSKKIRIAEKQKLPMILVLGDDEVAKRSVALRDRRAKEQKNLSLDEFIKLVKEKMSEVYF.

The tract at residues 208–499 is catalytic; that stretch reads DHRKLGIELK…LTEHCAGEFP (292 aa). Residues Cys-300, His-351, and His-476 each coordinate Zn(2+).

It belongs to the class-II aminoacyl-tRNA synthetase family. In terms of assembly, homodimer. The cofactor is Zn(2+).

It localises to the cytoplasm. It catalyses the reaction tRNA(Thr) + L-threonine + ATP = L-threonyl-tRNA(Thr) + AMP + diphosphate + H(+). Catalyzes the attachment of threonine to tRNA(Thr) in a two-step reaction: L-threonine is first activated by ATP to form Thr-AMP and then transferred to the acceptor end of tRNA(Thr). Also edits incorrectly charged L-seryl-tRNA(Thr). This chain is Threonine--tRNA ligase, found in Campylobacter jejuni subsp. doylei (strain ATCC BAA-1458 / RM4099 / 269.97).